The following is a 193-amino-acid chain: 7-methyl-GTP pyrophosphatase (193 aa).

D70 acts as the Proton acceptor in catalysis.

The protein belongs to the Maf family. YceF subfamily. The cofactor is a divalent metal cation.

It is found in the cytoplasm. It carries out the reaction N(7)-methyl-GTP + H2O = N(7)-methyl-GMP + diphosphate + H(+). Its function is as follows. Nucleoside triphosphate pyrophosphatase that hydrolyzes 7-methyl-GTP (m(7)GTP). May have a dual role in cell division arrest and in preventing the incorporation of modified nucleotides into cellular nucleic acids. The protein is 7-methyl-GTP pyrophosphatase of Photobacterium profundum (strain SS9).